The chain runs to 224 residues: UPF0758 protein Sde_3678 (224 aa).

An MPN domain is found at 102–224 (SLTSTTAVKQ…AVSFAERGWI (123 aa)). The Zn(2+) site is built by His173, His175, and Asp186. Positions 173–186 (HNHPSGIAEPSEPD) match the JAMM motif motif.

Belongs to the UPF0758 family.

The sequence is that of UPF0758 protein Sde_3678 from Saccharophagus degradans (strain 2-40 / ATCC 43961 / DSM 17024).